The chain runs to 191 residues: Glutathione S-transferase Y-2 (191 aa).

One can recognise a GST N-terminal domain in the interval 2-80; the sequence is TFATVYIKPH…YIVAKGSKPE (79 aa). The GST C-terminal domain maps to 85 to 191; it reads TTEERATNTR…VSQHPIIKNM (107 aa).

The protein belongs to the GST superfamily.

It carries out the reaction RX + glutathione = an S-substituted glutathione + a halide anion + H(+). Conjugation of reduced glutathione to a wide number of exogenous and endogenous hydrophobic electrophiles. In Pichia kudriavzevii (Yeast), this protein is Glutathione S-transferase Y-2 (GSTY2).